A 245-amino-acid chain; its full sequence is MIIPAIDLIDGNVVRLYQGDYGQQTTFDLSPLAQLQSYEAQGAKWLHIVDLTGAKDPGKRQTLLISQLVAGLNANIQVGGGIRTEEQVTELLDIGVKRVVIGSLAVKEPELVKQWFIKYGSEAICLALDVNINQSGEKIVAVSGWQSGGGKSLESLVETFSAVGLKHALVTDISRDGTLTGANTALYQEIAASYPDIAWQASGGIATLEDVAAVRDSGAAGIIIGKALLINQFNVVEAIQCWPND.

The Proton acceptor role is filled by D7. The active-site Proton donor is D129.

Belongs to the HisA/HisF family.

It is found in the cytoplasm. The catalysed reaction is 1-(5-phospho-beta-D-ribosyl)-5-[(5-phospho-beta-D-ribosylamino)methylideneamino]imidazole-4-carboxamide = 5-[(5-phospho-1-deoxy-D-ribulos-1-ylimino)methylamino]-1-(5-phospho-beta-D-ribosyl)imidazole-4-carboxamide. It functions in the pathway amino-acid biosynthesis; L-histidine biosynthesis; L-histidine from 5-phospho-alpha-D-ribose 1-diphosphate: step 4/9. In Shewanella baltica (strain OS155 / ATCC BAA-1091), this protein is 1-(5-phosphoribosyl)-5-[(5-phosphoribosylamino)methylideneamino] imidazole-4-carboxamide isomerase.